The sequence spans 210 residues: 7-methyl-GTP pyrophosphatase (210 aa).

Asp79 serves as the catalytic Proton acceptor.

This sequence belongs to the Maf family. YceF subfamily. The cofactor is a divalent metal cation.

Its subcellular location is the cytoplasm. It catalyses the reaction N(7)-methyl-GTP + H2O = N(7)-methyl-GMP + diphosphate + H(+). Its function is as follows. Nucleoside triphosphate pyrophosphatase that hydrolyzes 7-methyl-GTP (m(7)GTP). May have a dual role in cell division arrest and in preventing the incorporation of modified nucleotides into cellular nucleic acids. The protein is 7-methyl-GTP pyrophosphatase of Burkholderia lata (strain ATCC 17760 / DSM 23089 / LMG 22485 / NCIMB 9086 / R18194 / 383).